The chain runs to 106 residues: Toxin-like structure LSTX-D8 (106 aa).

Positions Met-1 to Ser-20 are cleaved as a signal peptide. A propeptide spanning residues Glu-21–Arg-41 is cleaved from the precursor. 4 disulfide bridges follow: Cys-45/Cys-60, Cys-52/Cys-69, Cys-59/Cys-85, and Cys-71/Cys-83.

The protein belongs to the neurotoxin 19 (CSTX) family. 02 (D7) subfamily. Expressed by the venom gland.

The protein localises to the secreted. In Lycosa singoriensis (Wolf spider), this protein is Toxin-like structure LSTX-D8.